We begin with the raw amino-acid sequence, 473 residues long: Phosphatidylserine synthase 1 (473 aa).

Alanine 2 bears the N-acetylalanine mark. The Cytoplasmic portion of the chain corresponds to 2–35 (ASCVGSRTLSKDDVNYRMHFRMINEQQVEDITID). Residues 36–56 (FFYRPHTITLLSFTIISLMYF) traverse the membrane as a helical segment. The Lumenal segment spans residues 57–72 (AFTRDDCVPEDNIWRG). Residues 73–93 (ILSVIFFFLIISVLAFPNGPF) traverse the membrane as a helical segment. The Cytoplasmic portion of the chain corresponds to 94 to 102 (TRPHPALWR). The helical transmembrane segment at 103–123 (MVFGLSVLYFLFLVFLLFLNF) threads the bilayer. At 124–186 (EQVKSLMYWL…AMKALLIRSY (63 aa)) the chain is on the lumenal side. The chain crosses the membrane as a helical span at residues 187-207 (GLCWTISITWELTELFFMHLL). The Cytoplasmic portion of the chain corresponds to 208–216 (PNFAECWWD). Residues 217–237 (QVILDILLCNGGGIWLGMVVC) form a helical membrane-spanning segment. The Lumenal segment spans residues 238 to 286 (RFLEMRTYHWASFKDIHTTTGKIKRAVLQFTPASWTYVRWFDPKSSFQR). Residues 287 to 307 (VAGIYLFMIIWQLTELNTFFL) traverse the membrane as a helical segment. The Cytoplasmic segment spans residues 308–319 (KHIFVFQASHPL). The helical transmembrane segment at 320–342 (SWCRILFIGCITAPTVRQYYAYL) threads the bilayer. The Lumenal portion of the chain corresponds to 343–355 (TDTQCKRVGTQCW). The helical transmembrane segment at 356-376 (VFGVIGFLEAIVCIKFGQDLF) threads the bilayer. The Cytoplasmic segment spans residues 377 to 383 (SKTQILY). The helical transmembrane segment at 384 to 404 (VVLWLLCVAFTTFLCLYGMVW) threads the bilayer. Over 405–473 (YAEHYGHREK…SKVTNGVGKK (69 aa)) the chain is Lumenal. Residues serine 417, serine 425, serine 442, and serine 454 each carry the phosphoserine modification. The tract at residues 430–473 (WYHGKGSKGSEDSPPKHSNNNESHSSRRRNRHSKSKVTNGVGKK) is disordered. Residues 455 to 464 (SRRRNRHSKS) are compositionally biased toward basic residues.

Belongs to the phosphatidyl serine synthase family.

Its subcellular location is the endoplasmic reticulum membrane. It catalyses the reaction a 1,2-diacyl-sn-glycero-3-phosphoethanolamine + L-serine = a 1,2-diacyl-sn-glycero-3-phospho-L-serine + ethanolamine. The catalysed reaction is a 1,2-diacyl-sn-glycero-3-phosphocholine + L-serine = a 1,2-diacyl-sn-glycero-3-phospho-L-serine + choline. It functions in the pathway phospholipid metabolism; phosphatidylserine biosynthesis. Its function is as follows. Catalyzes a base-exchange reaction in which the polar head group of phosphatidylethanolamine (PE) or phosphatidylcholine (PC) is replaced by L-serine. Catalyzes mainly the conversion of phosphatidylcholine but also converts, in vitro and to a lesser extent, phosphatidylethanolamine. This is Phosphatidylserine synthase 1 (Ptdss1) from Rattus norvegicus (Rat).